The following is a 554-amino-acid chain: MAIQHPDIQPAVNHSVQVAIAGAGPVGLMMANYLGQMGIDVLVVEKLDKLIDYPRAIGIDDEALRTMQSVGLVENVLPHTTPWHAMRFLTPKGRCFADIQPMTDEFGWPRRNAFIQPQVDAVMLEGLSRFPNVRCLFARELEAFSQQNDEVTLHLKTAEGQRETVKAQWLVACDGGASFVRRTLNVPFEGKTAPNQWIVVDIANDPLSTPHIYLCCDPVRPYVSAALPHAVRRFEFMVMPGETEEQLREPQNMRKLLSKVLPNPDNVELIRQRVYTHNARLAQRFRIDRVLLAGDAAHIMPVWQGQGYNSGMRDAFNLAWKLALVIQGKARDALLDTYQQERRDHAKAMIDLSVTAGNVLAPPKRWQGTLRDGVSWLLNYLPPVKRYFLEMRFKPMPQYYGGALMREGEAKHSPVGKMFIQPKVTLENGDVTLLDNAIGANFAVIGWGCNPLWGMSDEQIQQWRALGTRFIQVVPEVQIHTAQDNHDGVLRVGDTQGRLRSWFAQHNASLVVMRPDRFVAATAIPQTLGKTLNKLASVMTLTRPDADVSVEKVA.

Residues 17–46 and 285–295 each bind FAD; these read QVAIAGAGPVGLMMANYLGQMGIDVLVVEK and FRIDRVLLAGD.

The protein belongs to the PheA/TfdB FAD monooxygenase family. It depends on FAD as a cofactor.

The catalysed reaction is 3-(3-hydroxyphenyl)propanoate + NADH + O2 + H(+) = 3-(2,3-dihydroxyphenyl)propanoate + NAD(+) + H2O. It catalyses the reaction (2E)-3-(3-hydroxyphenyl)prop-2-enoate + NADH + O2 + H(+) = (2E)-3-(2,3-dihydroxyphenyl)prop-2-enoate + NAD(+) + H2O. The protein operates within aromatic compound metabolism; 3-phenylpropanoate degradation. Its function is as follows. Catalyzes the insertion of one atom of molecular oxygen into position 2 of the phenyl ring of 3-(3-hydroxyphenyl)propionate (3-HPP) and hydroxycinnamic acid (3HCI). The protein is 3-(3-hydroxy-phenyl)propionate/3-hydroxycinnamic acid hydroxylase of Escherichia coli O139:H28 (strain E24377A / ETEC).